The chain runs to 494 residues: Anthranilate synthase component 1 (494 aa).

L-tryptophan is bound by residues serine 52 and 274–276 (PYM). 309 to 310 (GT) contributes to the chorismate binding site. Glutamate 336 is a binding site for Mg(2+). Chorismate is bound by residues tyrosine 424, arginine 444, 458–460 (GAG), and glycine 460. Glutamate 473 provides a ligand contact to Mg(2+).

This sequence belongs to the anthranilate synthase component I family. As to quaternary structure, heterotetramer consisting of two non-identical subunits: a beta subunit (TrpG) and a large alpha subunit (TrpE). The cofactor is Mg(2+).

It catalyses the reaction chorismate + L-glutamine = anthranilate + pyruvate + L-glutamate + H(+). It participates in amino-acid biosynthesis; L-tryptophan biosynthesis; L-tryptophan from chorismate: step 1/5. Feedback inhibited by tryptophan. Part of a heterotetrameric complex that catalyzes the two-step biosynthesis of anthranilate, an intermediate in the biosynthesis of L-tryptophan. In the first step, the glutamine-binding beta subunit (TrpG) of anthranilate synthase (AS) provides the glutamine amidotransferase activity which generates ammonia as a substrate that, along with chorismate, is used in the second step, catalyzed by the large alpha subunit of AS (TrpE) to produce anthranilate. In the absence of TrpG, TrpE can synthesize anthranilate directly from chorismate and high concentrations of ammonia. This chain is Anthranilate synthase component 1 (trpE), found in Aquifex aeolicus (strain VF5).